A 393-amino-acid polypeptide reads, in one-letter code: SH3 domain-binding protein 5-like (393 aa).

2 disordered regions span residues Met-1–Arg-59 and His-272–Thr-332. Thr-13 carries the post-translational modification Phosphothreonine. A compositionally biased stretch (basic and acidic residues) spans Leu-18 to Pro-28. Phosphoserine is present on residues Ser-30 and Ser-49. Coiled-coil stretches lie at residues Arg-59–Ala-140 and Trp-169–His-272. The segment covering Gly-304–Gly-313 has biased composition (gly residues). Residues Glu-317–Thr-332 are compositionally biased toward low complexity. A phosphoserine mark is found at Ser-343, Ser-350, Ser-358, Ser-362, and Ser-378. The tract at residues Asp-364–Leu-393 is disordered. A compositionally biased stretch (basic residues) spans Gly-384 to Leu-393.

It belongs to the SH3BP5 family.

Functionally, functions as a guanine nucleotide exchange factor (GEF) for RAB11A. The sequence is that of SH3 domain-binding protein 5-like (SH3BP5L) from Pongo abelii (Sumatran orangutan).